The primary structure comprises 191 residues: Signal peptidase IB (191 aa).

Residues 1-7 (MKKELLE) lie on the Cytoplasmic side of the membrane. A helical membrane pass occupies residues 8-28 (WIISIAVAFVILFIVGKFIVT). Residues 29–191 (PYTIKGESMD…YNFNPENTKN (163 aa)) lie on the Extracellular side of the membrane. Catalysis depends on residues Ser36 and Lys77.

The protein belongs to the peptidase S26 family.

The protein localises to the cell membrane. The enzyme catalyses Cleavage of hydrophobic, N-terminal signal or leader sequences from secreted and periplasmic proteins.. Its function is as follows. Essential for cell viability. This is Signal peptidase IB (spsB) from Staphylococcus aureus (strain MRSA252).